Reading from the N-terminus, the 116-residue chain is Translation initiation factor 1A (116 aa).

Residues 1-25 (MRCLSKKHQKQGDEHGGEIPLPNPD) are disordered. The region spanning 17 to 91 (GEIPLPNPDE…EKGEVVYKYG (75 aa)) is the S1-like domain.

The protein belongs to the eIF-1A family.

Its function is as follows. Seems to be required for maximal rate of protein biosynthesis. Enhances ribosome dissociation into subunits and stabilizes the binding of the initiator Met-tRNA(I) to 40 S ribosomal subunits. This is Translation initiation factor 1A (eIF1A) from Desulfurococcus amylolyticus (strain DSM 18924 / JCM 16383 / VKM B-2413 / 1221n) (Desulfurococcus kamchatkensis).